The sequence spans 501 residues: Glycerol kinase (501 aa).

Residue threonine 16 coordinates ADP. ATP-binding residues include threonine 16, threonine 17, and serine 18. Position 16 (threonine 16) interacts with sn-glycerol 3-phosphate. Residue arginine 20 participates in ADP binding. Arginine 84, glutamate 85, tyrosine 135, and aspartate 242 together coordinate sn-glycerol 3-phosphate. 5 residues coordinate glycerol: arginine 84, glutamate 85, tyrosine 135, aspartate 242, and glutamine 243. Threonine 264 and glycine 307 together coordinate ADP. ATP is bound by residues threonine 264, glycine 307, glutamine 311, and glycine 408. ADP is bound at residue glycine 408.

The protein belongs to the FGGY kinase family.

The enzyme catalyses glycerol + ATP = sn-glycerol 3-phosphate + ADP + H(+). It functions in the pathway polyol metabolism; glycerol degradation via glycerol kinase pathway; sn-glycerol 3-phosphate from glycerol: step 1/1. Functionally, key enzyme in the regulation of glycerol uptake and metabolism. Catalyzes the phosphorylation of glycerol to yield sn-glycerol 3-phosphate. In Saccharolobus islandicus (strain M.16.27) (Sulfolobus islandicus), this protein is Glycerol kinase.